Reading from the N-terminus, the 532-residue chain is MESSPDPGELIKSSQPSFFEFQKQASLMTSCNLLWKELSEHFTSMEQNLMKKSEALRQMIETLDNQTQSSIELLKHREVTIDHSVEIAEGKVEERVRAALDSLEKARDCGDEDTGEVDDGDGLLSALKSLCLKMDARGFWGFVIARKKELENLRSQIPVALVDCVDPPKLVLEAVSEVFPVDKRGGGEKVSNDFGWACVVILESLIPVMVDPVMGKSRLLVTPSVKEKAKEIAETWKASLEERGGIENVKTPDVHTFLQHLVTFGIVKKDDLALYRKLVVGSAWRKQMPKLAVSVGLGDQMPDMIEELIIRGQQLDAVHFTFEVGLVHLFPPVPLLKAYLRDAKKATALITDDSNNSGRSAHLVARKEQSALRAVLKCIEEYKLEEEFPPENLKKRLDQLEKTKTEKRKPAVIPANKRTRASYSGPMPPAKAGRITNAYVSSFPPPPPTFIRSQSHSPQYGVPAYTTSPPTIYSNRSPPYQYSPEAVHGSYQTSPVSYPTAYGTYCSPVAAPPPPVYHPHPHHHHHIQHAYY.

It belongs to the Frigida family. As to expression, expressed in leaves, shoot apex, flowers and during seed development.

In Arabidopsis thaliana (Mouse-ear cress), this protein is FRIGIDA-like protein 4b (FRL4B).